We begin with the raw amino-acid sequence, 622 residues long: 1,4-alpha-glucan branching enzyme GlgB (622 aa).

D300 acts as the Nucleophile in catalysis. E351 functions as the Proton donor in the catalytic mechanism.

Belongs to the glycosyl hydrolase 13 family. GlgB subfamily. In terms of assembly, monomer.

It carries out the reaction Transfers a segment of a (1-&gt;4)-alpha-D-glucan chain to a primary hydroxy group in a similar glucan chain.. It participates in glycan biosynthesis; glycogen biosynthesis. Functionally, catalyzes the formation of the alpha-1,6-glucosidic linkages in glycogen by scission of a 1,4-alpha-linked oligosaccharide from growing alpha-1,4-glucan chains and the subsequent attachment of the oligosaccharide to the alpha-1,6 position. This Streptococcus agalactiae serotype V (strain ATCC BAA-611 / 2603 V/R) protein is 1,4-alpha-glucan branching enzyme GlgB.